The chain runs to 287 residues: 2-dehydro-3-deoxyphosphooctonate aldolase (287 aa).

It belongs to the KdsA family.

It is found in the cytoplasm. The enzyme catalyses D-arabinose 5-phosphate + phosphoenolpyruvate + H2O = 3-deoxy-alpha-D-manno-2-octulosonate-8-phosphate + phosphate. The protein operates within carbohydrate biosynthesis; 3-deoxy-D-manno-octulosonate biosynthesis; 3-deoxy-D-manno-octulosonate from D-ribulose 5-phosphate: step 2/3. Its pathway is bacterial outer membrane biogenesis; lipopolysaccharide biosynthesis. This chain is 2-dehydro-3-deoxyphosphooctonate aldolase, found in Nitrobacter hamburgensis (strain DSM 10229 / NCIMB 13809 / X14).